The following is a 389-amino-acid chain: Phosphoglycerate kinase (389 aa).

Residues 19–21 (DYN), arginine 34, 57–60 (HLGR), arginine 117, and arginine 150 each bind substrate. Residues lysine 200, glycine 288, glutamate 319, and 347 to 350 (GGDS) each bind ATP.

Belongs to the phosphoglycerate kinase family. Monomer.

The protein resides in the cytoplasm. The catalysed reaction is (2R)-3-phosphoglycerate + ATP = (2R)-3-phospho-glyceroyl phosphate + ADP. It participates in carbohydrate degradation; glycolysis; pyruvate from D-glyceraldehyde 3-phosphate: step 2/5. The polypeptide is Phosphoglycerate kinase (Deinococcus geothermalis (strain DSM 11300 / CIP 105573 / AG-3a)).